A 155-amino-acid chain; its full sequence is uncharacterized protein (155 aa).

Residues 56-79 (GEKRPTHRRPYRRTKPYPKRPSML) form a disordered region. A compositionally biased stretch (basic residues) spans 60–73 (PTHRRPYRRTKPYP).

This is an uncharacterized protein from Sinorhizobium fredii (strain NBRC 101917 / NGR234).